A 159-amino-acid chain; its full sequence is Growth arrest and DNA damage-inducible protein GADD45 gamma (159 aa).

A homodimerization region spans residues 43–86; the sequence is VYESAKVLNVDPDNVTFCVLAADEEDEGDIALQIHFTLIQAFCC.

This sequence belongs to the GADD45 family. Undergoes concentration-dependent homodimerization, which is required for growth inhibititory activity and enhances interaction with PCNA. Interacts with GADD45GIP1. Interacts with PCNA.

Functionally, involved in the regulation of growth and apoptosis. Mediates activation of stress-responsive MTK1/MEKK4 MAPKKK. The sequence is that of Growth arrest and DNA damage-inducible protein GADD45 gamma (GADD45G) from Bos taurus (Bovine).